Consider the following 115-residue polypeptide: Toxin-like structure LSTX-D1 (115 aa).

Residues 1–22 form the signal peptide; sequence MKVLVLFSVLFLTLFSYSSTEA. Positions 23–44 are excised as a propeptide; that stretch reads IDEFDSDAEEDMLSLMANEQVR. Disulfide bonds link C48–C63, C55–C72, C62–C87, and C74–C85.

Belongs to the neurotoxin 19 (CSTX) family. 01 subfamily. Expressed by the venom gland.

Its subcellular location is the secreted. This is Toxin-like structure LSTX-D1 from Lycosa singoriensis (Wolf spider).